A 453-amino-acid chain; its full sequence is O-glucose prenyltransferase PaPT (453 aa).

Position 95 to 96 (95 to 96 (AP)) interacts with L-tryptophan. Residues K210, Y212, R279, K281, Y283, Y368, and Y435 each contribute to the substrate site.

This sequence belongs to the tryptophan dimethylallyltransferase family.

The protein operates within mycotoxin biosynthesis. Its function is as follows. O-glucose prenyltransferase; part of the 2 gene clusters that mediate the biosynthesis of fusicoccins, diterpene glucosides that display phytohormone-like activity and function as potent activators of plasma membrane H(+)-ATPases in plants by modifying 14-3-3 proteins and cause the plant disease constriction canker. The first step in the pathway is performed by the fusicoccadiene synthase PaFS that possesses both prenyl transferase and terpene cyclase activity, converting isopentenyl diphosphate and dimethylallyl diphosphate into geranylgeranyl diphosphate (GGDP) and successively converting GGDP into fusicocca-2,10(14)-diene, a precursor for fusicoccin H. The second step is the oxidation at the C-8 position by the cytochrome P450 monooxygenase PaP450-2 to yield fusicocca-2,10(14)-diene-8-beta-ol. The cytochrome P450 monooxygenase PaP450-1 then catalyzes the hydroxylation at the C-16 position to produce fusicocca-2,10(14)-diene-8-beta,16-diol. The dioxygenase fc-dox then catalyzes the 16-oxydation of fusicocca-2,10(14)-diene-8-beta,16-diol to yield an aldehyde (8-beta-hydroxyfusicocca-1,10(14)-dien-16-al). The short-chain dehydrogenase/reductase fc-sdr catalyzes the reduction of the aldehyde to yield fusicocca-1,10(14)-diene-8-beta,16-diol. The next step is the hydroxylation at C-9 performed by the cytochrome P450 monooxygenase PaP450-3 that leads to fusicoccin H aglycon which is glycosylated to fusicoccin H by the O-glycosyltransferase PaGT. Hydroxylation at C-12 by the cytochrome P450 monooxygenase PaP450-4 leads then to the production of fusicoccin Q and is followed by methylation by the O-methyltransferase PaMT to yield fusicoccin P. Fusicoccin P is further converted to fusicoccin J via prenylation by the O-glucose prenyltransferase PaPT. Cytochrome P450 monooxygenase PaP450-5 then performs hydroxylation at C-19 to yield dideacetyl-fusicoccin A which is acetylated to 3'-O-deacetyl-fusicoccin A by the O-acetyltransferase PaAT-2. Finally, a another acetylation by the O-acetyltransferase PaAT-1 yields fusicoccin A. The polypeptide is O-glucose prenyltransferase PaPT (Phomopsis amygdali (Fusicoccum amygdali)).